A 446-amino-acid polypeptide reads, in one-letter code: Tubulin beta-6 chain (446 aa).

The MREI motif motif lies at 1 to 4; sequence MREI. Positions 11, 69, 138, 142, 143, 144, 204, and 226 each coordinate GTP. Mg(2+) is bound at residue Glu69. Positions 419–446 are disordered; the sequence is VSEYQQYQDATADVEEYEEAEASPEKET. The span at 430 to 440 shows a compositional bias: acidic residues; it reads ADVEEYEEAEA.

Belongs to the tubulin family. In terms of assembly, dimer of alpha and beta chains. A typical microtubule is a hollow water-filled tube with an outer diameter of 25 nm and an inner diameter of 15 nM. Alpha-beta heterodimers associate head-to-tail to form protofilaments running lengthwise along the microtubule wall with the beta-tubulin subunit facing the microtubule plus end conferring a structural polarity. Microtubules usually have 13 protofilaments but different protofilament numbers can be found in some organisms and specialized cells. Mg(2+) serves as cofactor. In terms of processing, some glutamate residues at the C-terminus are polyglycylated, resulting in polyglycine chains on the gamma-carboxyl group. Glycylation is mainly limited to tubulin incorporated into axonemes (cilia and flagella) whereas glutamylation is prevalent in neuronal cells, centrioles, axonemes, and the mitotic spindle. Both modifications can coexist on the same protein on adjacent residues, and lowering polyglycylation levels increases polyglutamylation, and reciprocally. The precise function of polyglycylation is still unclear. Some glutamate residues at the C-terminus are polyglutamylated, resulting in polyglutamate chains on the gamma-carboxyl group. Polyglutamylation plays a key role in microtubule severing by spastin (SPAST). SPAST preferentially recognizes and acts on microtubules decorated with short polyglutamate tails: severing activity by SPAST increases as the number of glutamates per tubulin rises from one to eight, but decreases beyond this glutamylation threshold. Highly expressed in bone marrow.

The protein resides in the cytoplasm. It is found in the cytoskeleton. Tubulin is the major constituent of microtubules, a cylinder consisting of laterally associated linear protofilaments composed of alpha- and beta-tubulin heterodimers. Microtubules grow by the addition of GTP-tubulin dimers to the microtubule end, where a stabilizing cap forms. Below the cap, tubulin dimers are in GDP-bound state, owing to GTPase activity of alpha-tubulin. This is Tubulin beta-6 chain from Gallus gallus (Chicken).